A 270-amino-acid chain; its full sequence is Phosphoserine phosphatase (270 aa).

Residue Asp-67 is the Nucleophile of the active site. Residues Asp-67 and Asp-69 each coordinate Mg(2+). The active-site Proton donor is the Asp-69. Substrate contacts are provided by residues Glu-76, Arg-112, 156–157 (SG), and Lys-205. Asp-227 contributes to the Mg(2+) binding site.

Belongs to the HAD-like hydrolase superfamily. SerB family. Mg(2+) serves as cofactor.

The catalysed reaction is O-phospho-L-serine + H2O = L-serine + phosphate. It catalyses the reaction O-phospho-D-serine + H2O = D-serine + phosphate. It functions in the pathway amino-acid biosynthesis; L-serine biosynthesis; L-serine from 3-phospho-D-glycerate: step 3/3. Its function is as follows. Catalyzes the last step in the biosynthesis of serine from carbohydrates. The reaction mechanism proceeds via the formation of a phosphoryl-enzyme intermediates. This Drosophila melanogaster (Fruit fly) protein is Phosphoserine phosphatase (aay).